A 652-amino-acid polypeptide reads, in one-letter code: Acetyl-coenzyme A synthetase (652 aa).

CoA is bound by residues 190 to 193 (RGGR) and Thr310. ATP-binding positions include 386–388 (GEP), 410–415 (DTWWQT), Asp499, and Arg514. A CoA-binding site is contributed by Ser522. Arg525 is an ATP binding site. Residues Val536, His538, and Val541 each contribute to the Mg(2+) site. Position 583 (Arg583) interacts with CoA. The residue at position 608 (Lys608) is an N6-acetyllysine.

The protein belongs to the ATP-dependent AMP-binding enzyme family. The cofactor is Mg(2+). Post-translationally, acetylated. Deacetylation by the SIR2-homolog deacetylase activates the enzyme.

The catalysed reaction is acetate + ATP + CoA = acetyl-CoA + AMP + diphosphate. Functionally, catalyzes the conversion of acetate into acetyl-CoA (AcCoA), an essential intermediate at the junction of anabolic and catabolic pathways. AcsA undergoes a two-step reaction. In the first half reaction, AcsA combines acetate with ATP to form acetyl-adenylate (AcAMP) intermediate. In the second half reaction, it can then transfer the acetyl group from AcAMP to the sulfhydryl group of CoA, forming the product AcCoA. The polypeptide is Acetyl-coenzyme A synthetase (Methylorubrum extorquens (strain CM4 / NCIMB 13688) (Methylobacterium extorquens)).